Consider the following 883-residue polypeptide: Aldehyde-alcohol dehydrogenase (883 aa).

The aldehyde dehydrogenase stretch occupies residues 13 to 456 (KLVAEKHVDE…DNVSAINLLN (444 aa)). NAD(+) contacts are provided by residues 121 to 126 (ITPTTN), Gly206, and Gly224. Cys257 functions as the Nucleophile in the catalytic mechanism. Residues Glu355, Leu435, and 438 to 443 (GSYGRN) each bind NAD(+). Residues 457–464 (IKKVGRRR) form a linker region. NAD(+)-binding positions include Asp500, Asp534, 561-565 (GSPMD), 612-613 (TT), Val625, Lys634, and Leu653. Asp668, His672, His736, and His750 together coordinate Fe cation.

It in the N-terminal section; belongs to the aldehyde dehydrogenase family. This sequence in the C-terminal section; belongs to the iron-containing alcohol dehydrogenase family. Requires Fe(2+) as cofactor.

The catalysed reaction is ethanol + NAD(+) = acetaldehyde + NADH + H(+). It carries out the reaction an aldehyde + NAD(+) + H2O = a carboxylate + NADH + 2 H(+). Its function is as follows. Has alcohol dehydrogenase activity. Has aldehyde dehydrogenase activity. May play a role in enhancing virulence in mice. May be considered a potential virulence factor. This is Aldehyde-alcohol dehydrogenase from Streptococcus pneumoniae serotype 4 (strain ATCC BAA-334 / TIGR4).